Consider the following 284-residue polypeptide: tRNA pseudouridine synthase A (284 aa).

Aspartate 52 (nucleophile) is an active-site residue. Residue tyrosine 149 participates in substrate binding.

Belongs to the tRNA pseudouridine synthase TruA family. As to quaternary structure, homodimer.

The catalysed reaction is uridine(38/39/40) in tRNA = pseudouridine(38/39/40) in tRNA. Its function is as follows. Formation of pseudouridine at positions 38, 39 and 40 in the anticodon stem and loop of transfer RNAs. The polypeptide is tRNA pseudouridine synthase A (Orientia tsutsugamushi (strain Boryong) (Rickettsia tsutsugamushi)).